A 440-amino-acid polypeptide reads, in one-letter code: Proline--tRNA ligase (440 aa).

Belongs to the class-II aminoacyl-tRNA synthetase family. ProS type 2 subfamily. Homodimer.

Its subcellular location is the cytoplasm. The catalysed reaction is tRNA(Pro) + L-proline + ATP = L-prolyl-tRNA(Pro) + AMP + diphosphate. Catalyzes the attachment of proline to tRNA(Pro) in a two-step reaction: proline is first activated by ATP to form Pro-AMP and then transferred to the acceptor end of tRNA(Pro). The chain is Proline--tRNA ligase from Xanthobacter autotrophicus (strain ATCC BAA-1158 / Py2).